The sequence spans 560 residues: Dihydroxy-acid dehydratase (560 aa).

Cys-50 provides a ligand contact to [2Fe-2S] cluster. Asp-82 is a binding site for Mg(2+). Residue Cys-123 participates in [2Fe-2S] cluster binding. Mg(2+)-binding residues include Asp-124 and Lys-125. N6-carboxylysine is present on Lys-125. Cys-195 contacts [2Fe-2S] cluster. Glu-447 contributes to the Mg(2+) binding site. The Proton acceptor role is filled by Ser-473.

This sequence belongs to the IlvD/Edd family. Homodimer. [2Fe-2S] cluster serves as cofactor. It depends on Mg(2+) as a cofactor.

The catalysed reaction is (2R)-2,3-dihydroxy-3-methylbutanoate = 3-methyl-2-oxobutanoate + H2O. It catalyses the reaction (2R,3R)-2,3-dihydroxy-3-methylpentanoate = (S)-3-methyl-2-oxopentanoate + H2O. Its pathway is amino-acid biosynthesis; L-isoleucine biosynthesis; L-isoleucine from 2-oxobutanoate: step 3/4. The protein operates within amino-acid biosynthesis; L-valine biosynthesis; L-valine from pyruvate: step 3/4. Its function is as follows. Functions in the biosynthesis of branched-chain amino acids. Catalyzes the dehydration of (2R,3R)-2,3-dihydroxy-3-methylpentanoate (2,3-dihydroxy-3-methylvalerate) into 2-oxo-3-methylpentanoate (2-oxo-3-methylvalerate) and of (2R)-2,3-dihydroxy-3-methylbutanoate (2,3-dihydroxyisovalerate) into 2-oxo-3-methylbutanoate (2-oxoisovalerate), the penultimate precursor to L-isoleucine and L-valine, respectively. In Methylibium petroleiphilum (strain ATCC BAA-1232 / LMG 22953 / PM1), this protein is Dihydroxy-acid dehydratase.